Reading from the N-terminus, the 225-residue chain is Putative O-phosphotransferase MT2714 (225 aa).

30–37 (GGSSAGKT) contributes to the ATP binding site.

To S.violaceus chloramphenicol 3-O phosphotransferase.

The protein is Putative O-phosphotransferase MT2714 of Mycobacterium tuberculosis (strain CDC 1551 / Oshkosh).